Here is a 921-residue protein sequence, read N- to C-terminus: DNA ligase (921 aa).

NAD(+) contacts are provided by residues 90-94 (DAAYD), 139-140 (SL), and E173. Catalysis depends on K175, which acts as the N6-AMP-lysine intermediate. NAD(+) is bound by residues R196, E235, K360, and K384. Residues C481, C484, C500, and C506 each coordinate Zn(2+). The interval 663-688 (EAAIESAETQGGAASETTGAPTGAEA) is disordered. In terms of domain architecture, BRCT spans 839-921 (SLPQTLAGKT…AQLLETGSID (83 aa)).

Belongs to the NAD-dependent DNA ligase family. LigA subfamily. Requires Mg(2+) as cofactor. The cofactor is Mn(2+).

The catalysed reaction is NAD(+) + (deoxyribonucleotide)n-3'-hydroxyl + 5'-phospho-(deoxyribonucleotide)m = (deoxyribonucleotide)n+m + AMP + beta-nicotinamide D-nucleotide.. Functionally, DNA ligase that catalyzes the formation of phosphodiester linkages between 5'-phosphoryl and 3'-hydroxyl groups in double-stranded DNA using NAD as a coenzyme and as the energy source for the reaction. It is essential for DNA replication and repair of damaged DNA. The chain is DNA ligase from Bifidobacterium longum subsp. infantis (strain ATCC 15697 / DSM 20088 / JCM 1222 / NCTC 11817 / S12).